We begin with the raw amino-acid sequence, 921 residues long: Dual serine/threonine and tyrosine protein kinase (921 aa).

The region spanning P645–L899 is the Protein kinase domain. Residues L651–V659 and K674 each bind ATP. D770 serves as the catalytic Proton acceptor.

It belongs to the protein kinase superfamily. Ser/Thr protein kinase family.

The protein resides in the cytoplasm. It is found in the cell membrane. The protein localises to the apical cell membrane. Its subcellular location is the basolateral cell membrane. It localises to the cell junction. The enzyme catalyses L-seryl-[protein] + ATP = O-phospho-L-seryl-[protein] + ADP + H(+). It catalyses the reaction L-threonyl-[protein] + ATP = O-phospho-L-threonyl-[protein] + ADP + H(+). The catalysed reaction is L-tyrosyl-[protein] + ATP = O-phospho-L-tyrosyl-[protein] + ADP + H(+). May act as a positive regulator of ERK phosphorylation downstream of fibroblast growth factor-receptor activation. May induce both caspase-dependent apoptosis and caspase-independent cell death. May play a role in the embryonic development. This Takifugu rubripes (Japanese pufferfish) protein is Dual serine/threonine and tyrosine protein kinase (dstyk).